The chain runs to 341 residues: Methionine import ATP-binding protein MetN 3 (341 aa).

The ABC transporter domain occupies 2 to 241 (ILLENVKKIY…PQQDITKRFV (240 aa)). 38–45 (GYSGAGKS) provides a ligand contact to ATP.

Belongs to the ABC transporter superfamily. Methionine importer (TC 3.A.1.24) family. In terms of assembly, the complex is composed of two ATP-binding proteins (MetN), two transmembrane proteins (MetI) and a solute-binding protein (MetQ).

It is found in the cell membrane. The enzyme catalyses L-methionine(out) + ATP + H2O = L-methionine(in) + ADP + phosphate + H(+). The catalysed reaction is D-methionine(out) + ATP + H2O = D-methionine(in) + ADP + phosphate + H(+). Its function is as follows. Part of the ABC transporter complex MetNIQ involved in methionine import. Responsible for energy coupling to the transport system. This chain is Methionine import ATP-binding protein MetN 3, found in Bacillus cereus (strain ZK / E33L).